The following is a 485-amino-acid chain: Pumilio domain-containing protein 7 (485 aa).

The interval 29-72 is disordered; the sequence is NKTHKNKNPKPPVKLLPYRHGSNTTSSDSDSYIFNSGSGSSDAE. Residues 49–71 are compositionally biased toward polar residues; it reads GSNTTSSDSDSYIFNSGSGSSDA. 8 Pumilio repeats span residues 86–124, 128–163, 164–200, 201–236, 237–279, 287–324, 326–361, and 370–411; these read DVLL…AVFE, ESTT…ELLR, QMID…QLIQ, ELST…TFFV, HFLS…FRIQ, CIVR…TIID, CLLR…EMME, and DVES…RELP. The segment at 439–454 is RNA-binding; that stretch reads FSSGKKIIDSVMRHGV.

In terms of biological role, RNA-binding protein that binds to the consensus sequence 5'-CUCUGUAUCUUGU-3' in mRNA 3'-UTRs and modulates mRNA expression and stability. Functions redundantly with puf-5 and puf-6 in oocyte formation and organization, early embryonic cell divisions, and repression of expression of glp-1 and other maternal mRNAs in late oogenesis. The protein is Pumilio domain-containing protein 7 of Caenorhabditis elegans.